The chain runs to 91 residues: Parbolysin P6 (91 aa).

3 disulfides stabilise this stretch: Cys16–Cys37, Cys22–Cys33, and Cys47–Cys60.

This sequence belongs to the worm cytolysin family. Localized within the skin and proboscis and are most readily isolated from body mucus secretions.

Its subcellular location is the secreted. In terms of biological role, cytolysin that shows hemolytic activity (on bovine erythrocytes, HC(50)=5.75 mg/ml). This hemolytic activity is completely inhibited by small unilamelar vesicles composed of PC/PG, PC/PI and PC/PS in 1:1 molar ratios (with at least 100 mg/ml concentration). The protein is Parbolysin P6 of Parborlasia corrugatus (Antarctic nemertean worm).